Consider the following 88-residue polypeptide: Small ribosomal subunit protein bS20 (88 aa).

This sequence belongs to the bacterial ribosomal protein bS20 family.

Functionally, binds directly to 16S ribosomal RNA. The chain is Small ribosomal subunit protein bS20 from Bartonella henselae (strain ATCC 49882 / DSM 28221 / CCUG 30454 / Houston 1) (Rochalimaea henselae).